We begin with the raw amino-acid sequence, 1004 residues long: NACHT, LRR and PYD domains-containing protein 9C (1004 aa).

In terms of domain architecture, Pyrin spans 1-92; that stretch reads MVDSSSYGLL…TMAQIERRDK (92 aa). The 323-residue stretch at 143 to 465 folds into the NACHT domain; that stretch reads ATAVVLGTRG…KQDKDTYHPV (323 aa). 149 to 156 is an ATP binding site; it reads GTRGKGKT. 5 LRR repeats span residues 750–770, 779–800, 807–828, 836–857, and 864–884; these read KVKH…MFLC, VLES…HLYE, HLSL…LLCE, TLKE…EISA, and NLKT…KRLC.

The protein belongs to the NLRP family. In terms of tissue distribution, oocyte specific.

It localises to the cytoplasm. Its function is as follows. May be involved in inflammation. The polypeptide is NACHT, LRR and PYD domains-containing protein 9C (Nlrp9c) (Mus musculus (Mouse)).